The sequence spans 272 residues: Dermonecrotic toxin LvSicTox-alphaIC1bv (272 aa).

His-5 is an active-site residue. The Mg(2+) site is built by Glu-25 and Asp-27. The active-site Nucleophile is the His-41. Cystine bridges form between Cys-45–Cys-51 and Cys-47–Cys-189. Asp-84 contributes to the Mg(2+) binding site.

This sequence belongs to the arthropod phospholipase D family. Class II subfamily. Mg(2+) serves as cofactor. As to expression, expressed by the venom gland.

It localises to the secreted. The enzyme catalyses an N-(acyl)-sphingosylphosphocholine = an N-(acyl)-sphingosyl-1,3-cyclic phosphate + choline. It carries out the reaction an N-(acyl)-sphingosylphosphoethanolamine = an N-(acyl)-sphingosyl-1,3-cyclic phosphate + ethanolamine. It catalyses the reaction a 1-acyl-sn-glycero-3-phosphocholine = a 1-acyl-sn-glycero-2,3-cyclic phosphate + choline. The catalysed reaction is a 1-acyl-sn-glycero-3-phosphoethanolamine = a 1-acyl-sn-glycero-2,3-cyclic phosphate + ethanolamine. Dermonecrotic toxins cleave the phosphodiester linkage between the phosphate and headgroup of certain phospholipids (sphingolipid and lysolipid substrates), forming an alcohol (often choline) and a cyclic phosphate. This toxin acts on sphingomyelin (SM). It may also act on ceramide phosphoethanolamine (CPE), lysophosphatidylcholine (LPC) and lysophosphatidylethanolamine (LPE), but not on lysophosphatidylserine (LPS), and lysophosphatidylglycerol (LPG). It acts by transphosphatidylation, releasing exclusively cyclic phosphate products as second products. Induces dermonecrosis, hemolysis, increased vascular permeability, edema, inflammatory response, and platelet aggregation. This chain is Dermonecrotic toxin LvSicTox-alphaIC1bv, found in Loxosceles variegata (Recluse spider).